Consider the following 93-residue polypeptide: MARSIKKGPFVDTHLQAKVQAEGPSSKKVIKTWSRRSTITPDFIGLTFAVHNGRKFIPVFVTENMVGHKMGEFAPTRTFFGHAADKKSKLKKK.

This sequence belongs to the universal ribosomal protein uS19 family.

Its function is as follows. Protein S19 forms a complex with S13 that binds strongly to the 16S ribosomal RNA. This Geotalea uraniireducens (strain Rf4) (Geobacter uraniireducens) protein is Small ribosomal subunit protein uS19.